Reading from the N-terminus, the 184-residue chain is ADP-ribosylation factor-like protein 8b (184 aa).

The note=Mediates targeting to membranes intramembrane region spans 1–18; the sequence is MGLWDALLNWLRSLFFKQ. GTP is bound by residues 29–34, 48–51, 70–74, and 129–132; these read NAGKTS, MIPT, DLGGQ, and NKID.

This sequence belongs to the small GTPase superfamily. Arf family. In terms of assembly, interacts with tubulin.

The protein resides in the late endosome membrane. It is found in the lysosome membrane. Its subcellular location is the cytoplasm. It localises to the cytoskeleton. The protein localises to the spindle. In terms of biological role, may play a role in lysosome motility. May play a role in chromosome segregation. (Microbial infection) Component of tomato mosaic virus (ToMV) RNA replication complexes. Required for tobamovirus multiplication, especially for efficient negative-strand RNA synthesis and viral RNA capping. This Arabidopsis thaliana (Mouse-ear cress) protein is ADP-ribosylation factor-like protein 8b.